The chain runs to 639 residues: Polyvinylalcohol dehydrogenase (639 aa).

A signal peptide spans 1–33 (MQQNIERNQVSMTTSRFVWGAVMALVALGSASA). The region spanning 36-152 (LNLPDGAALY…TPDQWNGWGA (117 aa)) is the Cytochrome c domain. Residues Cys-49, Cys-52, and His-53 each coordinate heme.

The protein belongs to the bacterial PQQ dehydrogenase family. Monomer. The cofactor is pyrroloquinoline quinone.

It localises to the cytoplasm. It carries out the reaction a polyvinyl alcohol + 2n Fe(III)-[cytochrome c] = an oxidized polyvinyl alcohol + 2n Fe(II)-[cytochrome c] + 2n H(+). In terms of biological role, catalyzes the oxidation of polyvinyl alcohol (PVA) in the polyvinyl alcohol degradation pathway. This chain is Polyvinylalcohol dehydrogenase (pvaA), found in Pseudomonas sp.